Reading from the N-terminus, the 372-residue chain is Ca(2+)/H(+) antiporter (372 aa).

Transmembrane regions (helical) follow at residues 7-27 (IFLVLLVFCPLSFAAHWLGWG), 29-49 (TTVFILAGLAIVPLAAFMGTA), 62-82 (GGLLNATFGNATELILAYIAL), 94-114 (LTGSIIGNLLLVMGFAVFLGG), 134-154 (MNLGVVAILLPTALQYTSTGV), 162-182 (LSVAVAVVLIGVYLLSLVFSM), 222-242 (LWTGVLLVVTLGVAVESELLV), 251-271 (SLGLTALFTGVIVLPIIGNAA), 294-314 (GSSLQIAFFVAPVLVIVGWAI), 320-340 (LNFNPFELVAVLVAVLIVNSI), and 352-372 (ILLLATYAIVALAFFFHPTLV).

This sequence belongs to the Ca(2+):cation antiporter (CaCA) (TC 2.A.19) family. Cation/proton exchanger (CAX) subfamily.

The protein localises to the cell inner membrane. Ca(+)/H(+) antiporter that extrudes calcium in exchange for external protons. Plays an important role in salt tolerance. Does not transport sodium or lithium. This Synechocystis sp. (strain ATCC 27184 / PCC 6803 / Kazusa) protein is Ca(2+)/H(+) antiporter.